Here is a 74-residue protein sequence, read N- to C-terminus: uncharacterized protein (74 aa).

Residues 7–26 traverse the membrane as a helical segment; the sequence is IHLYVMASAMSSSPIFFFFQ.

The protein localises to the membrane. This is an uncharacterized protein from Homo sapiens (Human).